Consider the following 461-residue polypeptide: Proline--tRNA ligase (461 aa).

Belongs to the class-II aminoacyl-tRNA synthetase family. ProS type 3 subfamily. In terms of assembly, homodimer.

It localises to the cytoplasm. The enzyme catalyses tRNA(Pro) + L-proline + ATP = L-prolyl-tRNA(Pro) + AMP + diphosphate. Catalyzes the attachment of proline to tRNA(Pro) in a two-step reaction: proline is first activated by ATP to form Pro-AMP and then transferred to the acceptor end of tRNA(Pro). The protein is Proline--tRNA ligase of Methanococcus vannielii (strain ATCC 35089 / DSM 1224 / JCM 13029 / OCM 148 / SB).